We begin with the raw amino-acid sequence, 932 residues long: DNA mismatch repair protein MutS (932 aa).

615–622 (GPNMAGKS) provides a ligand contact to ATP.

The protein belongs to the DNA mismatch repair MutS family.

In terms of biological role, this protein is involved in the repair of mismatches in DNA. It is possible that it carries out the mismatch recognition step. This protein has a weak ATPase activity. The protein is DNA mismatch repair protein MutS of Clostridium botulinum (strain 657 / Type Ba4).